Consider the following 354-residue polypeptide: uncharacterized protein (354 aa).

To yeast YHR056c.

This is an uncharacterized protein from Saccharomyces cerevisiae (strain ATCC 204508 / S288c) (Baker's yeast).